Here is a 270-residue protein sequence, read N- to C-terminus: Non-structural maintenance of chromosomes element 1 homolog (270 aa).

The RING-type; atypical zinc-finger motif lies at 185-226 (CNVCRKVAIQSQLCENCGIPLHLQCAGKYFHGKANPTCPNCN). The segment at 236–270 (LNQVSSQGPSHSQTETVRGRNQRSKNTSTASRTSR) is disordered. 2 stretches are compositionally biased toward polar residues: residues 237 to 251 (NQVS…QTET) and 259 to 270 (SKNTSTASRTSR).

Belongs to the NSE1 family. Component of the SMC5-SMC6 complex.

The protein localises to the nucleus. It localises to the chromosome. It is found in the telomere. The catalysed reaction is S-ubiquitinyl-[E2 ubiquitin-conjugating enzyme]-L-cysteine + [acceptor protein]-L-lysine = [E2 ubiquitin-conjugating enzyme]-L-cysteine + N(6)-ubiquitinyl-[acceptor protein]-L-lysine.. Functionally, RING-type zinc finger-containing E3 ubiquitin ligase that assembles with melanoma antigen protein (MAGE) to catalyze the direct transfer of ubiquitin from E2 ubiquitin-conjugating enzyme to a specific substrate. Within MAGE-RING ubiquitin ligase complex, MAGE stimulates and specifies ubiquitin ligase activity likely through recruitment and/or stabilization of the E2 ubiquitin-conjugating enzyme at the E3:substrate complex. Involved in maintenance of genome integrity, DNA damage response and DNA repair. The chain is Non-structural maintenance of chromosomes element 1 homolog (nsmce1) from Xenopus laevis (African clawed frog).